The sequence spans 600 residues: ATP-dependent zinc metalloprotease FtsH 1 (600 aa).

Residues Met-1–Lys-8 are Cytoplasmic-facing. The helical transmembrane segment at Ile-9–Leu-29 threads the bilayer. At Asp-30–Leu-130 the chain is on the extracellular side. The chain crosses the membrane as a helical span at residues Ile-131–Ile-151. Residues Lys-152–Lys-600 are Cytoplasmic-facing. Gly-215–Thr-222 is an ATP binding site. His-437 serves as a coordination point for Zn(2+). Residue Glu-438 is part of the active site. The Zn(2+) site is built by His-441 and Asp-513.

The protein in the central section; belongs to the AAA ATPase family. This sequence in the C-terminal section; belongs to the peptidase M41 family. In terms of assembly, homohexamer. Zn(2+) is required as a cofactor.

It is found in the cell membrane. Functionally, acts as a processive, ATP-dependent zinc metallopeptidase for both cytoplasmic and membrane proteins. Plays a role in the quality control of integral membrane proteins. The protein is ATP-dependent zinc metalloprotease FtsH 1 of Phytoplasma mali (strain AT).